The following is a 496-amino-acid chain: Xylulose kinase (496 aa).

Substrate is bound at residue 83–84 (MH). Asp-237 (proton acceptor) is an active-site residue.

The protein belongs to the FGGY kinase family.

The enzyme catalyses D-xylulose + ATP = D-xylulose 5-phosphate + ADP + H(+). Its function is as follows. Catalyzes the phosphorylation of D-xylulose to D-xylulose 5-phosphate. The sequence is that of Xylulose kinase from Staphylococcus epidermidis (strain ATCC 12228 / FDA PCI 1200).